The sequence spans 398 residues: Small ribosomal subunit protein mS78 (rPPR3a) (398 aa).

A mitochondrion-targeting transit peptide spans 1-19; the sequence is MSSLSRVLRGTFNTCPIRR. PPR repeat units follow at residues 108–142, 143–173, 179–213, 214–248, 249–283, 284–318, and 319–353; these read KEGF…DCKR, SVLS…LPGK, DIVS…GLKP, DIVT…NVAI, DIRT…GLKP, DVFS…GYRP, and DKAT…RYLV.

The protein belongs to the PPR family. P subfamily. In terms of assembly, component of the mitochondrial ribosome small subunit.

Its subcellular location is the mitochondrion. This chain is Small ribosomal subunit protein mS78 (rPPR3a), found in Arabidopsis thaliana (Mouse-ear cress).